Here is a 444-residue protein sequence, read N- to C-terminus: Cholecystokinin receptor type A (444 aa).

The Extracellular segment spans residues 1–56 (MSHSPARQHLVESSRMDVVDSLLMNGSNITPPCELGLENETLFCLDQPQPSKEWQS). N-linked (GlcNAc...) asparagine glycosylation is found at Asn-25 and Asn-39. Cys-33 and Cys-44 are disulfide-bonded. The chain crosses the membrane as a helical span at residues 57–82 (ALQILLYSIIFLLSVLGNTLVITVLI). At 83 to 92 (RNKRMRTVTN) the chain is on the cytoplasmic side. A helical membrane pass occupies residues 93 to 119 (IFLLSLAVSDLMLCLFCMPFNLIPNLL). At 120-130 (KDFIFGSAVCK) the chain is on the extracellular side. A disulfide bridge links Cys-129 with Cys-211. Residues 131–152 (TTTYFMGTSVSVSTFNLVAISL) form a helical membrane-spanning segment. Topologically, residues 153–172 (ERYGAICRPLQSRVWQTKSH) are cytoplasmic. The chain crosses the membrane as a helical span at residues 173–193 (ALKVIAATWCLSFTIMTPYPI). At 194-225 (YSNLVPFTKNNNQTANMCRFLLPSDAMQQSWQ) the chain is on the extracellular side. The N-linked (GlcNAc...) asparagine glycan is linked to Asn-205. The chain crosses the membrane as a helical span at residues 226-249 (TFLLLILFLLPGIVMVVAYGLISL). The Cytoplasmic segment spans residues 250 to 329 (ELYQGIKFDA…NLIAKKRVIR (80 aa)). Residues 263-288 (KSAKEKKPSTGSSTRYEDSDGCYLQK) are disordered. Residues 330 to 350 (MLIVIVVLFFLCWMPIFSANA) traverse the membrane as a helical segment. Topologically, residues 351 to 365 (WRAYDTVSAEKHLSG) are extracellular. The helical transmembrane segment at 366-389 (TPISFILLLSYTSSCVNPIIYCFM) threads the bilayer. Topologically, residues 390-444 (NKRFRLGFMATFPCCPNPGPPGVRGEVGEEEDGRTIRALLSRYSYSHMSTSAPPP) are cytoplasmic. Cys-403 carries the S-palmitoyl cysteine lipid modification.

It belongs to the G-protein coupled receptor 1 family. As to expression, pancreas and brain. Also expressed in the gastrointestinal system and vagus nerve.

Its subcellular location is the cell membrane. In terms of biological role, receptor for cholecystokinin. Mediates pancreatic growth and enzyme secretion, smooth muscle contraction of the gall bladder and stomach. Has a 1000-fold higher affinity for CCK rather than for gastrin. It modulates feeding and dopamine-induced behavior in the central and peripheral nervous system. This receptor mediates its action by association with G proteins that activate a phosphatidylinositol-calcium second messenger system. The polypeptide is Cholecystokinin receptor type A (Cckar) (Rattus norvegicus (Rat)).